The chain runs to 182 residues: MNLKEAEEKMQKAIEATKNSFNTVRTGRANASLLDRVMVEYYGSPTQLKSMANIGIPDASTITIQPYDKTSLGLIEKAINMSDVGLTPNNDGSIIRLNIPALTAERRQEMVKKTAKLAEEGKVSIRNIRRDAVDSIRKQEKNSDISKDESRDLQDKVQKKTDKYIAKIDELLAAKEKDMTTV.

Positions 136–156 (IRKQEKNSDISKDESRDLQDK) are disordered.

Belongs to the RRF family.

The protein localises to the cytoplasm. Functionally, responsible for the release of ribosomes from messenger RNA at the termination of protein biosynthesis. May increase the efficiency of translation by recycling ribosomes from one round of translation to another. The chain is Ribosome-recycling factor from Trichodesmium erythraeum (strain IMS101).